The primary structure comprises 147 residues: Thyrotropin subunit beta (147 aa).

The first 20 residues, M1–S20, serve as a signal peptide directing secretion. 6 cysteine pairs are disulfide-bonded: C22–C72, C36–C87, C39–C126, C47–C103, C51–C105, and C108–C115. The N-linked (GlcNAc...) asparagine glycan is linked to N43.

It belongs to the glycoprotein hormones subunit beta family. As to quaternary structure, heterodimer of a common alpha chain and a unique beta chain which confers biological specificity to thyrotropin, lutropin, follitropin and gonadotropin.

It is found in the secreted. Its function is as follows. Indispensable for the control of thyroid structure and metabolism. May play some role in the biological processes of the immature fishes. This chain is Thyrotropin subunit beta (tshb), found in Anguilla anguilla (European freshwater eel).